The following is a 187-amino-acid chain: dCTP deaminase, dUMP-forming (187 aa).

Residues 101-106, D119, 127-129, Q148, Y162, K170, and Q174 contribute to the dCTP site; these read KSSLGR and TLE. Residue E129 is the Proton donor/acceptor of the active site.

The protein belongs to the dCTP deaminase family. Homotrimer.

It catalyses the reaction dCTP + 2 H2O = dUMP + NH4(+) + diphosphate. It functions in the pathway pyrimidine metabolism; dUMP biosynthesis; dUMP from dCTP: step 1/1. In terms of biological role, bifunctional enzyme that catalyzes both the deamination of dCTP to dUTP and the hydrolysis of dUTP to dUMP without releasing the toxic dUTP intermediate. The chain is dCTP deaminase, dUMP-forming from Corynebacterium diphtheriae (strain ATCC 700971 / NCTC 13129 / Biotype gravis).